The primary structure comprises 308 residues: Lipoyl synthase 2 (308 aa).

[4Fe-4S] cluster contacts are provided by Cys49, Cys54, Cys60, Cys75, Cys79, Cys82, and Ser300. A Radical SAM core domain is found at 61 to 289 (YASGTATFLL…KRIAEGLGFK (229 aa)).

The protein belongs to the radical SAM superfamily. Lipoyl synthase family. [4Fe-4S] cluster is required as a cofactor.

Its subcellular location is the cytoplasm. The catalysed reaction is [[Fe-S] cluster scaffold protein carrying a second [4Fe-4S](2+) cluster] + N(6)-octanoyl-L-lysyl-[protein] + 2 oxidized [2Fe-2S]-[ferredoxin] + 2 S-adenosyl-L-methionine + 4 H(+) = [[Fe-S] cluster scaffold protein] + N(6)-[(R)-dihydrolipoyl]-L-lysyl-[protein] + 4 Fe(3+) + 2 hydrogen sulfide + 2 5'-deoxyadenosine + 2 L-methionine + 2 reduced [2Fe-2S]-[ferredoxin]. The protein operates within protein modification; protein lipoylation via endogenous pathway; protein N(6)-(lipoyl)lysine from octanoyl-[acyl-carrier-protein]: step 2/2. Functionally, catalyzes the radical-mediated insertion of two sulfur atoms into the C-6 and C-8 positions of the octanoyl moiety bound to the lipoyl domains of lipoate-dependent enzymes, thereby converting the octanoylated domains into lipoylated derivatives. The chain is Lipoyl synthase 2 from Prochlorococcus marinus (strain SARG / CCMP1375 / SS120).